A 294-amino-acid polypeptide reads, in one-letter code: ATP synthase gamma chain (294 aa).

The protein belongs to the ATPase gamma chain family. In terms of assembly, F-type ATPases have 2 components, CF(1) - the catalytic core - and CF(0) - the membrane proton channel. CF(1) has five subunits: alpha(3), beta(3), gamma(1), delta(1), epsilon(1). CF(0) has three main subunits: a, b and c.

The protein localises to the cell inner membrane. In terms of biological role, produces ATP from ADP in the presence of a proton gradient across the membrane. The gamma chain is believed to be important in regulating ATPase activity and the flow of protons through the CF(0) complex. This is ATP synthase gamma chain from Campylobacter jejuni (strain RM1221).